A 446-amino-acid chain; its full sequence is Chromosomal replication initiator protein DnaA (446 aa).

Residues 1-72 (MENILDLWNK…ADTIYELTGE (72 aa)) are domain I, interacts with DnaA modulators. The domain II stretch occupies residues 72 to 109 (EELSIKFIIPQNQDEVEAMPKSPIKKMSKEDPVDIPQN). The interval 110–326 (MLNPKYTFDT…GALIRVVAYS (217 aa)) is domain III, AAA+ region. G154, G156, K157, and T158 together coordinate ATP. The tract at residues 327–446 (SLINKDINAD…HVKEIKEQLK (120 aa)) is domain IV, binds dsDNA.

This sequence belongs to the DnaA family. As to quaternary structure, oligomerizes as a right-handed, spiral filament on DNA at oriC.

It localises to the cytoplasm. Plays an essential role in the initiation and regulation of chromosomal replication. ATP-DnaA binds to the origin of replication (oriC) to initiate formation of the DNA replication initiation complex once per cell cycle. Binds the DnaA box (a 9 base pair repeat at the origin) and separates the double-stranded (ds)DNA. Forms a right-handed helical filament on oriC DNA; dsDNA binds to the exterior of the filament while single-stranded (ss)DNA is stabiized in the filament's interior. The ATP-DnaA-oriC complex binds and stabilizes one strand of the AT-rich DNA unwinding element (DUE), permitting loading of DNA polymerase. After initiation quickly degrades to an ADP-DnaA complex that is not apt for DNA replication. Binds acidic phospholipids. This chain is Chromosomal replication initiator protein DnaA, found in Bacillus pumilus (strain SAFR-032).